We begin with the raw amino-acid sequence, 1101 residues long: Coiled-coil domain-containing protein 150 (1101 aa).

Coiled-coil stretches lie at residues 106–299 (RLES…DLTS), 398–680 (AAHA…KEDN), 712–940 (DSEI…NYEQ), and 970–1033 (VRNK…EAHR). The span at 1055 to 1071 (SGEDRWQEKDQDVKHDV) shows a compositional bias: basic and acidic residues. A disordered region spans residues 1055–1101 (SGEDRWQEKDQDVKHDVMSNQSVLHRWERKQNLRPMPKKYHSEVQRK).

The polypeptide is Coiled-coil domain-containing protein 150 (CCDC150) (Homo sapiens (Human)).